We begin with the raw amino-acid sequence, 326 residues long: MGNAALRQLAALESVAFDDISGSVIAVDAHNWLYRYLTTTVKFTSDAAYTTESGVEVANLIGVVQGLPKFFEHDLTPVFVFDGGVTELKDEEVQERRVAREEAVELQAAAEERGDELAASRLEARTQRLTETIHETTRGLLNRLDVPIIEAPAEGEAQAAEMAIRGDVDYVGSEDYDTLLFGAPYTVRQLTSKGDPELMDLQTTLKNQNLTREQLVDVAILCGTDFNDGISGIGPATAISAINDHGDLWSVLDARDEFIQHADRVRSLFLDPPVTNEYTLHTTINPDMDAARSYVVDDWEVPADEVERGFERIETSVVQTGLDEWI.

The interval 1–100 (MGNAALRQLA…EEVQERRVAR (100 aa)) is N-domain. Asp-28, Asp-82, Glu-154, Glu-156, Asp-175, Asp-177, and Asp-225 together coordinate Mg(2+). An I-domain region spans residues 118 to 246 (AASRLEARTQ…TAISAINDHG (129 aa)). The interaction with PCNA stretch occupies residues 318–326 (VQTGLDEWI).

Belongs to the XPG/RAD2 endonuclease family. FEN1 subfamily. Interacts with PCNA. PCNA stimulates the nuclease activity without altering cleavage specificity. It depends on Mg(2+) as a cofactor.

Its function is as follows. Structure-specific nuclease with 5'-flap endonuclease and 5'-3' exonuclease activities involved in DNA replication and repair. During DNA replication, cleaves the 5'-overhanging flap structure that is generated by displacement synthesis when DNA polymerase encounters the 5'-end of a downstream Okazaki fragment. Binds the unpaired 3'-DNA end and kinks the DNA to facilitate 5' cleavage specificity. Cleaves one nucleotide into the double-stranded DNA from the junction in flap DNA, leaving a nick for ligation. Also involved in the base excision repair (BER) pathway. Acts as a genome stabilization factor that prevents flaps from equilibrating into structures that lead to duplications and deletions. Also possesses 5'-3' exonuclease activity on nicked or gapped double-stranded DNA. This is Flap endonuclease 1 from Haloquadratum walsbyi (strain DSM 16790 / HBSQ001).